The sequence spans 1517 residues: MSKFKVIEIKEDARPRDFEAFQLRLASPEKIKSWSYGEVKKPETINYRTLKPERDGLFCAKIFGPIRDYECLCGKYKKMRFKGVKCEKCGVEVANSKVRRSRMGHIELVTPVAHIWYVNSLPSRIGTLLGVKMKDLERVLYYEAYIVENPGDAFYDNESTKKVEYCDVLNEEQYQNLMQRYENSGFKARMGGEVVRDLLANLDLVALLNQLKEEMAATNSEAKKKTIIKRLKVVENFLNSNLNANTDSDEAVPNRPEWMMITNLPVLPPDLRPLVALDGGKFAVSDVNDLYRRVINRNTRLKKLMELDAPEIIIRNEKRMLQEAVDALFDNGRRANAVKGANKRPLKSLSEIIKGKQGRFRQNLLGKRVDFSGRSVIVVGPKLRMDQCGLPKKMALELFKPHLLAKLEEKGYATTVKQAKKMIENKTNEVWECLEEVVKGHPVMLNRAPTLHKLSIQAFHPVLVEGKAIQLHPLVCAAFNADFDGDQMAVHVPLSQEAIAECKVLMLSSMNILLPASGKSVTVPSQDMVLGIYYLSLEKAGAKGSHKICTGIDEVMMALESKCLDIHASIQTMVDGRKITTTAGRLIIKSILPDFVPENSWNKVLKKKDIAALVDYVYKQGGLEITASFLDRLKNLGFEYATKAGISISIADIIVPNDKQKAIDEAKKQVREIQNSYNLGLITSGERYNKIIDIWKSTNNVLSKEMMKLVEKDKEGFNSIYMMADSGARGSAAQISQLAAMRGLMTKPDGSIIETPIISNFREGLNVLEYFISTHGARKGLADTALKTANAGYLTRKLIDVAQNVKITIEDCGTHEGVEINEITADSSIIETLEERILGRVLAEDVIDPITNSVLFAEGTLMDEEKAKILGESGIKSVNIRTPITCKAKKGICAKCYGINLGEGKLVKPGEAVGIVSAQSIGEPGTQLTLRTFHSGGTASTDLQDRQVSAQKEGFIRFYNLKTYKNKEGKNIVANRRNAAILLVEPKIKTPFKGVINIENIHEDVIVSIKDKKQEVKYILRKYDLAKPNELAGVSGSIDGKLYLPYQSGMQVEENESIVEVIKEGWNVLNRIPFASEILVEDGEPVVQNIKAGEKGTLKFYILKGDGLDRVKNVKKGDIVKEKGFFVVIADENDREAKRHYIPRESKIEFNDSEKIDDANTIIASAPKKERKVIAEWDAYNNTIIAEIDGVVSFEDIEAGYSADEQIDEATGKRSLVINEYLPSGVRPTLVIAGKGDKAVRYQLEPKTVIFVHDGDKIAQADILAKTPKAAAKSKDITGGLPRVSELFEARKPKNAAVIAEIDGVVRFDKPLRSKERIIIQAEDGTSAEYLIDKSKHIQVRDGEFIHAGEKLTDGVVSSHDVLKILGEKALHYYLISEIQQVYRGQGVVISDKHIEVIVSQMLRQVKVVDSGHTKFIEGDLVSRRKFREENERIIRMGGEPAIAEPVLLGVTRAAIGSDSVISAASFQETTKVLTEASIAGKFDYLEDLKENVILGRMIPVGTGLYGEQNLKLKEQE.

The Zn(2+) site is built by C71, C73, C86, and C89. Mg(2+) is bound by residues D482, D484, and D486. 4 residues coordinate Zn(2+): C812, C886, C893, and C896.

Belongs to the RNA polymerase beta' chain family. In terms of assembly, the RNAP catalytic core consists of 2 alpha, 1 beta, 1 beta' and 1 omega subunit. When a sigma factor is associated with the core the holoenzyme is formed, which can initiate transcription. The cofactor is Mg(2+). It depends on Zn(2+) as a cofactor.

It carries out the reaction RNA(n) + a ribonucleoside 5'-triphosphate = RNA(n+1) + diphosphate. DNA-dependent RNA polymerase catalyzes the transcription of DNA into RNA using the four ribonucleoside triphosphates as substrates. The sequence is that of DNA-directed RNA polymerase subunit beta' from Campylobacter jejuni subsp. jejuni serotype O:23/36 (strain 81-176).